A 221-amino-acid polypeptide reads, in one-letter code: Ribosomal RNA small subunit methyltransferase Nep1 (221 aa).

Residues Gly-174, Gly-179, and 196-201 (IGNVSL) each bind S-adenosyl-L-methionine.

This sequence belongs to the class IV-like SAM-binding methyltransferase superfamily. RNA methyltransferase NEP1 family. As to quaternary structure, homodimer.

It carries out the reaction a pseudouridine in rRNA + S-adenosyl-L-methionine = an N(1)-methylpseudouridine in rRNA + S-adenosyl-L-homocysteine + H(+). In terms of biological role, methyltransferase involved in ribosomal biogenesis. Specifically catalyzes the N1-methylation of the pseudouridine corresponding to position 914 in M.jannaschii 16S rRNA. In Pyrobaculum calidifontis (strain DSM 21063 / JCM 11548 / VA1), this protein is Ribosomal RNA small subunit methyltransferase Nep1.